A 435-amino-acid chain; its full sequence is Probable E3 ubiquitin-protein ligase makorin-1 (435 aa).

2 C3H1-type zinc fingers span residues 18–45 (WTKH…HDLT) and 48–75 (KPAA…HCKP). The segment at 81-109 (LPAPQMLPLPSASLAGPSDPEPSGPTPVP) is disordered. The span at 99–108 (DPEPSGPTPV) shows a compositional bias: pro residues. The C3H1-type 3 zinc finger occupies 155-182 (QLRKQLCPYAAVGECRYGINCAYLHGDV). Residues 183-210 (CYMCGLQVLHPTDNNQRSEHTKACIEAH) form a makorin-type Cys-His region. The RING-type zinc finger occupies 228 to 282 (CGVCMEVVFEKANPSERRFGILSNCSHCYCLKCIRKWRSAKQFESKIIKSCPECR). Residues 311–340 (GMGSKPCRYFDEGRGTCPFGSNCFYKHAFP) form a C3H1-type 4 zinc finger. Residues 345–369 (EEAQPQRRQTGSNSRNRNSRRTPLW) form a disordered region.

In terms of tissue distribution, weakly expressed in adult brain, heart and kidney.

The catalysed reaction is S-ubiquitinyl-[E2 ubiquitin-conjugating enzyme]-L-cysteine + [acceptor protein]-L-lysine = [E2 ubiquitin-conjugating enzyme]-L-cysteine + N(6)-ubiquitinyl-[acceptor protein]-L-lysine.. It functions in the pathway protein modification; protein ubiquitination. In terms of biological role, E3 ubiquitin ligase catalyzing the covalent attachment of ubiquitin moieties onto substrate proteins. The protein is Probable E3 ubiquitin-protein ligase makorin-1 of Seriola quinqueradiata (Five-ray yellowtail).